The sequence spans 239 residues: Probable transcriptional regulatory protein lin0388 (239 aa).

This sequence belongs to the TACO1 family. YeeN subfamily.

Its subcellular location is the cytoplasm. The sequence is that of Probable transcriptional regulatory protein lin0388 from Listeria innocua serovar 6a (strain ATCC BAA-680 / CLIP 11262).